The following is a 745-amino-acid chain: Exocyst complex component 3 (745 aa).

Lysine 28 carries the post-translational modification N6-acetyllysine.

Belongs to the SEC6 family. In terms of assembly, the exocyst complex is composed of EXOC1, EXOC2, EXOC3, EXOC4, EXOC5, EXOC6, EXOC7 and EXOC8. Interacts with EXOC3L1. Interacts with BIRC6/bruce. Interacts with MYRIP. Interacts with SLC6A9. As to expression, expressed in epididymis (at protein level).

The protein localises to the cytoplasm. Its subcellular location is the perinuclear region. It localises to the cell projection. It is found in the growth cone. The protein resides in the midbody. The protein localises to the golgi apparatus. Its subcellular location is the neuron projection. Component of the exocyst complex involved in the docking of exocytic vesicles with fusion sites on the plasma membrane. This chain is Exocyst complex component 3 (EXOC3), found in Homo sapiens (Human).